A 451-amino-acid polypeptide reads, in one-letter code: uncharacterized protein (451 aa).

The TRAM domain maps to 2-60; sequence NLKVKQKIPLKIKRMGINGEGIGFYQKTLVFVPGALKGEDIYCQITSIRRNFVEAKLLK. Residues Cys-73, Cys-79, Cys-82, and Cys-162 each contribute to the [4Fe-4S] cluster site. Residues Gln-283, Tyr-312, Asp-333, and Asp-381 each coordinate S-adenosyl-L-methionine. Cys-408 functions as the Nucleophile in the catalytic mechanism.

This sequence belongs to the class I-like SAM-binding methyltransferase superfamily. RNA M5U methyltransferase family.

This is an uncharacterized protein from Streptococcus pneumoniae serotype 4 (strain ATCC BAA-334 / TIGR4).